The chain runs to 172 residues: Crossover junction endodeoxyribonuclease RuvC (172 aa).

Active-site residues include Asp-11, Glu-70, and Asp-142. 3 residues coordinate Mg(2+): Asp-11, Glu-70, and Asp-142.

The protein belongs to the RuvC family. In terms of assembly, homodimer which binds Holliday junction (HJ) DNA. The HJ becomes 2-fold symmetrical on binding to RuvC with unstacked arms; it has a different conformation from HJ DNA in complex with RuvA. In the full resolvosome a probable DNA-RuvA(4)-RuvB(12)-RuvC(2) complex forms which resolves the HJ. Requires Mg(2+) as cofactor.

Its subcellular location is the cytoplasm. The enzyme catalyses Endonucleolytic cleavage at a junction such as a reciprocal single-stranded crossover between two homologous DNA duplexes (Holliday junction).. Functionally, the RuvA-RuvB-RuvC complex processes Holliday junction (HJ) DNA during genetic recombination and DNA repair. Endonuclease that resolves HJ intermediates. Cleaves cruciform DNA by making single-stranded nicks across the HJ at symmetrical positions within the homologous arms, yielding a 5'-phosphate and a 3'-hydroxyl group; requires a central core of homology in the junction. The consensus cleavage sequence is 5'-(A/T)TT(C/G)-3'. Cleavage occurs on the 3'-side of the TT dinucleotide at the point of strand exchange. HJ branch migration catalyzed by RuvA-RuvB allows RuvC to scan DNA until it finds its consensus sequence, where it cleaves and resolves the cruciform DNA. The chain is Crossover junction endodeoxyribonuclease RuvC from Hydrogenovibrio crunogenus (strain DSM 25203 / XCL-2) (Thiomicrospira crunogena).